We begin with the raw amino-acid sequence, 173 residues long: Large ribosomal subunit protein uL10 (173 aa).

It belongs to the universal ribosomal protein uL10 family. Part of the ribosomal stalk of the 50S ribosomal subunit. The N-terminus interacts with L11 and the large rRNA to form the base of the stalk. The C-terminus forms an elongated spine to which L12 dimers bind in a sequential fashion forming a multimeric L10(L12)X complex.

Its function is as follows. Forms part of the ribosomal stalk, playing a central role in the interaction of the ribosome with GTP-bound translation factors. The chain is Large ribosomal subunit protein uL10 from Cupriavidus necator (strain ATCC 17699 / DSM 428 / KCTC 22496 / NCIMB 10442 / H16 / Stanier 337) (Ralstonia eutropha).